The chain runs to 188 residues: Putative manganese efflux pump MntP (188 aa).

Transmembrane regions (helical) follow at residues 3 to 23 (FYAL…VALA), 35 to 55 (IAAT…AGWV), 63 to 83 (FISE…GLKM), 107 to 127 (VLTA…LAFM), 131 to 151 (IAFA…VGLA), and 167 to 187 (AGGL…LGLI).

It belongs to the MntP (TC 9.B.29) family.

The protein localises to the cell inner membrane. Functionally, probably functions as a manganese efflux pump. The sequence is that of Putative manganese efflux pump MntP from Neisseria meningitidis serogroup A / serotype 4A (strain DSM 15465 / Z2491).